Reading from the N-terminus, the 772-residue chain is UDP-N-acetylmuramoyl-L-alanyl-D-glutamate--2,6-diaminopimelate ligase MurE homolog, chloroplastic (772 aa).

The transit peptide at 1 to 40 (MAFTFLSPHPVFLSLTGTTSSFSYKPVLLPFSRNSRTLTV) directs the protein to the chloroplast. Disordered stretches follow at residues 42–87 (AGPA…KLEE) and 141–168 (LLKP…DVTD). Composition is skewed to acidic residues over residues 54–63 (ADDDPPEAPE) and 158–168 (EGNEEEGDVTD). Ser194 bears the Phosphoserine mark.

The protein belongs to the MurCDEF family. MurE subfamily. In terms of assembly, component of the plastid-encoded plastid RNA polymerase (PEP) complex. As to expression, expressed in leaves and flowers.

It is found in the plastid. It localises to the chloroplast. Involved in chloroplast biogenesis. Required for thylakoid membrane development. Seems to be required for plastid-encoded plastid RNA polymerase (PEP)-dependent gene expression. The chain is UDP-N-acetylmuramoyl-L-alanyl-D-glutamate--2,6-diaminopimelate ligase MurE homolog, chloroplastic from Arabidopsis thaliana (Mouse-ear cress).